Reading from the N-terminus, the 132-residue chain is Fatty acid-binding protein, adipocyte (132 aa).

Cysteine 2 carries the post-translational modification N-acetylcysteine. Serine 13 is modified (phosphoserine). The residue at position 20 (tyrosine 20) is a Phosphotyrosine; by Tyr-kinases. The short motif at 22–32 (KEVGVGFATRK) is the Nuclear localization signal element. 127 to 129 (RVY) contributes to the a fatty acid binding site.

The protein belongs to the calycin superfamily. Fatty-acid binding protein (FABP) family. As to quaternary structure, monomer. Homodimer. Interacts with PPARG.

The protein resides in the cytoplasm. It is found in the nucleus. Lipid transport protein in adipocytes. Binds both long chain fatty acids and retinoic acid. Delivers long-chain fatty acids and retinoic acid to their cognate receptors in the nucleus. FABPs are important elements related to the hibernating state in mammals. In Ictidomys tridecemlineatus (Thirteen-lined ground squirrel), this protein is Fatty acid-binding protein, adipocyte (FABP4).